Reading from the N-terminus, the 221-residue chain is Abscisic acid receptor PYL1 (221 aa).

A compositionally biased stretch (low complexity) spans 1–11 (MANSESSSSPV). A disordered region spans residues 1 to 22 (MANSESSSSPVNEEENSQRIST). Ala-2 is subject to N-acetylalanine. Positions 50–206 (YQLGNGRCSS…NLQKLASITE (157 aa)) are START-like. Abscisate contacts are provided by residues Lys-86, 116-121 (ANTSRE), 143-149 (RLRNYKS), and Glu-171. A Gate loop motif is present at residues 112 to 116 (SGLPA). Residues 142-144 (HRL) carry the Latch loop motif.

Belongs to the PYR/PYL/RCAR abscisic acid intracellular receptor family. As to quaternary structure, homodimer. Binds ABA on one subunit only. Interacts with HAB1, ABI1 and ABI2, and possibly with other PP2Cs. Binds to CARs protein in an ABA-independent manner, both at the plasma membrane and in the nucleus. Interacts directly with CAR1 and CAR4.

The protein resides in the cytoplasm. The protein localises to the nucleus. Its subcellular location is the cell membrane. Its function is as follows. Receptor for abscisic acid (ABA) required for ABA-mediated responses such as stomatal closure and germination inhibition. Inhibits the activity of group-A protein phosphatases type 2C (PP2Cs) when activated by ABA. Can be activated by both (-)-ABA and (+)-ABA. The protein is Abscisic acid receptor PYL1 (PYL1) of Arabidopsis thaliana (Mouse-ear cress).